A 260-amino-acid chain; its full sequence is Thiazole synthase (260 aa).

Lysine 96 (schiff-base intermediate with DXP) is an active-site residue. Residues glycine 157, 184-185 (AG), and 206-207 (NT) each bind 1-deoxy-D-xylulose 5-phosphate.

This sequence belongs to the ThiG family. Homotetramer. Forms heterodimers with either ThiH or ThiS.

It localises to the cytoplasm. It catalyses the reaction [ThiS sulfur-carrier protein]-C-terminal-Gly-aminoethanethioate + 2-iminoacetate + 1-deoxy-D-xylulose 5-phosphate = [ThiS sulfur-carrier protein]-C-terminal Gly-Gly + 2-[(2R,5Z)-2-carboxy-4-methylthiazol-5(2H)-ylidene]ethyl phosphate + 2 H2O + H(+). It functions in the pathway cofactor biosynthesis; thiamine diphosphate biosynthesis. Its function is as follows. Catalyzes the rearrangement of 1-deoxy-D-xylulose 5-phosphate (DXP) to produce the thiazole phosphate moiety of thiamine. Sulfur is provided by the thiocarboxylate moiety of the carrier protein ThiS. In vitro, sulfur can be provided by H(2)S. In Rhodopseudomonas palustris (strain HaA2), this protein is Thiazole synthase.